We begin with the raw amino-acid sequence, 147 residues long: UPF0735 ACT domain-containing protein GTNG_2535 (147 aa).

The ACT domain occupies threonine 69 to serine 144.

The protein belongs to the UPF0735 family.

In Geobacillus thermodenitrificans (strain NG80-2), this protein is UPF0735 ACT domain-containing protein GTNG_2535.